Here is a 202-residue protein sequence, read N- to C-terminus: Hydrogenase expression/formation protein HupD (202 aa).

Ni(2+) contacts are provided by glutamate 28, aspartate 74, and histidine 105.

This sequence belongs to the peptidase A31 family.

Functionally, not known. Could be involved in the processing of hydrogenase. In Rhizobium leguminosarum bv. viciae, this protein is Hydrogenase expression/formation protein HupD (hupD).